The following is a 945-amino-acid chain: Leucine--tRNA ligase (945 aa).

Positions 66–77 (PYPSGTGLHVGH) match the 'HIGH' region motif. Residues 716–720 (KMGKS) carry the 'KMSKS' region motif. Residue Lys719 coordinates ATP.

This sequence belongs to the class-I aminoacyl-tRNA synthetase family.

Its subcellular location is the cytoplasm. The catalysed reaction is tRNA(Leu) + L-leucine + ATP = L-leucyl-tRNA(Leu) + AMP + diphosphate. In Rhodococcus jostii (strain RHA1), this protein is Leucine--tRNA ligase.